The chain runs to 1846 residues: Brefeldin A-inhibited guanine nucleotide-exchange protein 1 (1846 aa).

Residues 2-224 (YEGKKTKNMF…QEAKQMERER (223 aa)) are DCB; DCB:DCB domain and DCB:HUS domain interaction. Ser-52 carries the phosphoserine modification. Disordered stretches follow at residues 216–249 (EAKQMERERHRQQQHLLQSPVSHHEPESPHLRYL), 264–304 (DLEP…ATAA), and 347–410 (ISAS…SPGA). The span at 264 to 277 (DLEPQTHDVDKSLQ) shows a compositional bias: basic and acidic residues. Phosphoserine is present on residues Ser-286, Ser-289, and Ser-290. 2 stretches are compositionally biased toward polar residues: residues 348 to 357 (SASTEGNTGT) and 391 to 406 (SVSSNDTQESGNSSGP). Ser-394 and Ser-407 each carry phosphoserine. The interval 554 to 574 (ADAQSVVDIYVNYDCDLNAAN) is HUS; DCB:HUS domain interaction. Positions 631–684 (PNSQTTLGQEKPSEQEISEVKHPETINRYGSLNSLESTSSSGIGSYSTQMSGTD) are disordered. The segment covering 641–655 (KPSEQEISEVKHPET) has biased composition (basic and acidic residues). Over residues 661-681 (SLNSLESTSSSGIGSYSTQMS) the composition is skewed to low complexity. Residues 688 to 877 (QFEVLKQQKE…SAIYNEIAGK (190 aa)) form the SEC7 domain. Residues 708–712 (KKPKR) carry the Nuclear localization signal (NLS) motif. Ser-1076, Ser-1563, and Ser-1566 each carry phosphoserine.

As to quaternary structure, homodimer. Interacts with ARFGEF2/BIG2; both proteins are probably part of the same or very similar macromolecular complexes. Interacts with FKBP2. Interacts with MYO9B. Interacts with PRKAR1A and PRKAR2A. Interacts with PPP1CC. Interacts with NCL, FBL, NUP62 and U3 small nucleolar RNA. Interacts with DPY30. Interacts with PDE3A. Interacts with KANK1. Interacts with TBC1D22A and TBC1D22B. Post-translationally, phosphorylated. In vitro phosphorylated by PKA reducing its GEF activity and dephosphorylated by phosphatase PP1.

It localises to the cytoplasm. The protein resides in the perinuclear region. Its subcellular location is the golgi apparatus. The protein localises to the trans-Golgi network. It is found in the nucleus. It localises to the nucleolus. The protein resides in the nucleus matrix. Its subcellular location is the membrane. Inhibited by brefeldin A. In terms of biological role, promotes guanine-nucleotide exchange on ARF1 and ARF3. Promotes the activation of ARF1/ARF3 through replacement of GDP with GTP. Involved in vesicular trafficking. Required for the maintenance of Golgi structure; the function may be independent of its GEF activity. Required for the maturation of integrin beta-1 in the Golgi. Involved in the establishment and persistence of cell polarity during directed cell movement in wound healing. Proposed to act as A kinase-anchoring protein (AKAP) and may mediate crosstalk between Arf and PKA pathways. Inhibits GAP activity of MYO9B probably through competitive RhoA binding. The function in the nucleus remains to be determined. This is Brefeldin A-inhibited guanine nucleotide-exchange protein 1 (Arfgef1) from Mus musculus (Mouse).